The sequence spans 208 residues: LexA repressor (208 aa).

The H-T-H motif DNA-binding region spans 30 to 50 (VREIGKSVGLSSSSTVAAYLE). Active-site for autocatalytic cleavage activity residues include serine 129 and lysine 167.

Belongs to the peptidase S24 family. Homodimer.

The catalysed reaction is Hydrolysis of Ala-|-Gly bond in repressor LexA.. Represses a number of genes involved in the response to DNA damage (SOS response), including recA and lexA. In the presence of single-stranded DNA, RecA interacts with LexA causing an autocatalytic cleavage which disrupts the DNA-binding part of LexA, leading to derepression of the SOS regulon and eventually DNA repair. The polypeptide is LexA repressor (Lacticaseibacillus casei (strain BL23) (Lactobacillus casei)).